The following is a 110-amino-acid chain: Holo-[acyl-carrier-protein] synthase (110 aa).

Asp8 and Glu54 together coordinate Mg(2+).

It belongs to the P-Pant transferase superfamily. AcpS family. It depends on Mg(2+) as a cofactor.

It localises to the cytoplasm. The catalysed reaction is apo-[ACP] + CoA = holo-[ACP] + adenosine 3',5'-bisphosphate + H(+). Functionally, transfers the 4'-phosphopantetheine moiety from coenzyme A to a Ser of acyl-carrier-protein. This is Holo-[acyl-carrier-protein] synthase from Mycoplasma mycoides subsp. mycoides SC (strain CCUG 32753 / NCTC 10114 / PG1).